Reading from the N-terminus, the 109-residue chain is Period circadian protein (109 aa).

Residues 59-109 (CFEGSGGSGSSGNFTSGSNLNMRSVTNTSNTGTGTSSESVPLVTLTEALIS) form a disordered region. Low complexity predominate over residues 69–98 (SGNFTSGSNLNMRSVTNTSNTGTGTSSESV).

Forms a heterodimer with timeless (TIM); the complex then translocates into the nucleus. In terms of processing, phosphorylated with a circadian rhythmicity, probably by the double-time protein (dbt). Phosphorylation could be implicated in the stability of per monomer and in the formation of heterodimer per-tim.

The protein resides in the nucleus. Its subcellular location is the cytoplasm. It localises to the perinuclear region. Its function is as follows. Essential for biological clock functions. Determines the period length of circadian and ultradian rhythms; an increase in PER dosage leads to shortened circadian rhythms and a decrease leads to lengthened circadian rhythms. Essential for the circadian rhythmicity of locomotor activity, eclosion behavior, and for the rhythmic component of the male courtship song that originates in the thoracic nervous system. The biological cycle depends on the rhythmic formation and nuclear localization of the TIM-PER complex. Light induces the degradation of TIM, which promotes elimination of PER. Nuclear activity of the heterodimer coordinatively regulates PER and TIM transcription through a negative feedback loop. Behaves as a negative element in circadian transcriptional loop. Does not appear to bind DNA, suggesting indirect transcriptional inhibition. The protein is Period circadian protein (per) of Syritta pipiens (Hoverfly).